The sequence spans 264 residues: Indole-3-glycerol phosphate synthase (264 aa).

This sequence belongs to the TrpC family.

The catalysed reaction is 1-(2-carboxyphenylamino)-1-deoxy-D-ribulose 5-phosphate + H(+) = (1S,2R)-1-C-(indol-3-yl)glycerol 3-phosphate + CO2 + H2O. It participates in amino-acid biosynthesis; L-tryptophan biosynthesis; L-tryptophan from chorismate: step 4/5. The sequence is that of Indole-3-glycerol phosphate synthase from Lactococcus lactis subsp. cremoris (strain MG1363).